The following is a 103-amino-acid chain: Small ribosomal subunit protein uS17 (103 aa).

The interval 78 to 103 (SHSPKADKSAGSTAPAPEAAAKEVSE) is disordered.

Belongs to the universal ribosomal protein uS17 family. In terms of assembly, part of the 30S ribosomal subunit.

Its function is as follows. One of the primary rRNA binding proteins, it binds specifically to the 5'-end of 16S ribosomal RNA. The sequence is that of Small ribosomal subunit protein uS17 from Parasynechococcus marenigrum (strain WH8102).